The sequence spans 697 residues: uncharacterized protein (697 aa).

A DNA-binding region (zn(2)-C6 fungal-type) is located at residues Cys24–Cys51. Residues Tyr500–Leu520 form a helical membrane-spanning segment.

Its subcellular location is the nucleus membrane. This is an uncharacterized protein from Schizosaccharomyces pombe (strain 972 / ATCC 24843) (Fission yeast).